Consider the following 193-residue polypeptide: Putative 3-methyladenine DNA glycosylase (193 aa).

This sequence belongs to the DNA glycosylase MPG family.

This Agrobacterium fabrum (strain C58 / ATCC 33970) (Agrobacterium tumefaciens (strain C58)) protein is Putative 3-methyladenine DNA glycosylase.